Consider the following 493-residue polypeptide: UDP-N-acetylmuramoyl-L-alanyl-D-glutamate--2,6-diaminopimelate ligase (493 aa).

Positions 30 and 32 each coordinate UDP-N-acetyl-alpha-D-muramoyl-L-alanyl-D-glutamate. ATP is bound at residue 117–123 (GTNGKTT). Residues Asn158, 159-160 (TT), Ser186, Gln192, and Arg194 contribute to the UDP-N-acetyl-alpha-D-muramoyl-L-alanyl-D-glutamate site. N6-carboxylysine is present on Lys226. Meso-2,6-diaminopimelate is bound by residues Arg388, 412 to 415 (DNPR), Gly463, and Glu467. A Meso-diaminopimelate recognition motif motif is present at residues 412 to 415 (DNPR).

The protein belongs to the MurCDEF family. MurE subfamily. Mg(2+) is required as a cofactor. In terms of processing, carboxylation is probably crucial for Mg(2+) binding and, consequently, for the gamma-phosphate positioning of ATP.

It localises to the cytoplasm. It catalyses the reaction UDP-N-acetyl-alpha-D-muramoyl-L-alanyl-D-glutamate + meso-2,6-diaminopimelate + ATP = UDP-N-acetyl-alpha-D-muramoyl-L-alanyl-gamma-D-glutamyl-meso-2,6-diaminopimelate + ADP + phosphate + H(+). Its pathway is cell wall biogenesis; peptidoglycan biosynthesis. Catalyzes the addition of meso-diaminopimelic acid to the nucleotide precursor UDP-N-acetylmuramoyl-L-alanyl-D-glutamate (UMAG) in the biosynthesis of bacterial cell-wall peptidoglycan. The polypeptide is UDP-N-acetylmuramoyl-L-alanyl-D-glutamate--2,6-diaminopimelate ligase (Vibrio vulnificus (strain YJ016)).